The sequence spans 253 residues: Triosephosphate isomerase (253 aa).

9–11 (NWK) lines the substrate pocket. The Electrophile role is filled by histidine 95. Glutamate 167 serves as the catalytic Proton acceptor. Substrate is bound by residues glycine 173, serine 213, and 234-235 (GG). Serine 213 is modified (phosphoserine).

Belongs to the triosephosphate isomerase family. As to quaternary structure, homodimer.

Its subcellular location is the cytoplasm. The enzyme catalyses D-glyceraldehyde 3-phosphate = dihydroxyacetone phosphate. The protein operates within carbohydrate biosynthesis; gluconeogenesis. Its pathway is carbohydrate degradation; glycolysis; D-glyceraldehyde 3-phosphate from glycerone phosphate: step 1/1. In terms of biological role, involved in the gluconeogenesis. Catalyzes stereospecifically the conversion of dihydroxyacetone phosphate (DHAP) to D-glyceraldehyde-3-phosphate (G3P). The sequence is that of Triosephosphate isomerase from Geobacillus thermodenitrificans (strain NG80-2).